Reading from the N-terminus, the 230-residue chain is Nucleoside diphosphate kinase 2, chloroplastic (230 aa).

Residues 1 to 64 constitute a chloroplast transit peptide; sequence MEAMAVFSGS…SYPKTFRTRS (64 aa). 6 residues coordinate ATP: Lys-90, Phe-138, Arg-166, Thr-172, Arg-183, and Asn-193. The active-site Pros-phosphohistidine intermediate is the His-196.

Belongs to the NDK family. It depends on Mg(2+) as a cofactor.

It localises to the plastid. It is found in the chloroplast. The enzyme catalyses a 2'-deoxyribonucleoside 5'-diphosphate + ATP = a 2'-deoxyribonucleoside 5'-triphosphate + ADP. The catalysed reaction is a ribonucleoside 5'-diphosphate + ATP = a ribonucleoside 5'-triphosphate + ADP. Major role in the synthesis of nucleoside triphosphates other than ATP. The ATP gamma phosphate is transferred to the NDP beta phosphate via a ping-pong mechanism, using a phosphorylated active-site intermediate. The sequence is that of Nucleoside diphosphate kinase 2, chloroplastic (NDPK2) from Pisum sativum (Garden pea).